A 341-amino-acid polypeptide reads, in one-letter code: Glyceraldehyde-3-phosphate dehydrogenase 2 (341 aa).

NAD(+) is bound by residues 13–14, aspartate 35, and arginine 85; that span reads RI. D-glyceraldehyde 3-phosphate contacts are provided by residues 157–159, threonine 188, 217–218, and arginine 240; these read SCT and TG. Cysteine 158 functions as the Nucleophile in the catalytic mechanism. Asparagine 322 contributes to the NAD(+) binding site.

The protein belongs to the glyceraldehyde-3-phosphate dehydrogenase family. As to quaternary structure, homotetramer.

Its subcellular location is the cytoplasm. The catalysed reaction is D-glyceraldehyde 3-phosphate + phosphate + NAD(+) = (2R)-3-phospho-glyceroyl phosphate + NADH + H(+). The protein operates within carbohydrate degradation; glycolysis; pyruvate from D-glyceraldehyde 3-phosphate: step 1/5. This Caenorhabditis elegans protein is Glyceraldehyde-3-phosphate dehydrogenase 2 (gpd-2).